We begin with the raw amino-acid sequence, 734 residues long: Photosystem I P700 chlorophyll a apoprotein A2 (734 aa).

The next 8 membrane-spanning stretches (helical) occupy residues 46-69, 135-158, 175-199, 273-291, 330-353, 369-395, 417-439, and 517-535; these read IFASHFGQLAIIFLWTSGNLFHVA, LYTGALFLLFISAIFLIAGWLHLQ, LNHHLSGLFGVSSLAWTGHLVHVAI, IAHHHLAIAFIFLVAGHMY, LHFQLGLALASLGVITSLVAQHMY, AALYTHHQYIAGFIMTGAFAHGAIFFI, AIISHLSWASLFLGFHTLGLYVH, and FLVHHAIALGLHTTTLILV. Residues Cys559 and Cys568 each coordinate [4Fe-4S] cluster. A run of 2 helical transmembrane segments spans residues 575-596 and 643-665; these read AFYLAVFWMLNTIGWVTFYWHW and LSVWAWMFLFGHLVWAIGFMFLI. The chlorophyll a site is built by His654, Met662, and Tyr670. Trp671 serves as a coordination point for phylloquinone. A helical membrane pass occupies residues 707–727; the sequence is LVGLAHFSVGYIFTYAAFLIA.

This sequence belongs to the PsaA/PsaB family. The PsaA/B heterodimer binds the P700 chlorophyll special pair and subsequent electron acceptors. PSI consists of a core antenna complex that captures photons, and an electron transfer chain that converts photonic excitation into a charge separation. The eukaryotic PSI reaction center is composed of at least 11 subunits. P700 is a chlorophyll a/chlorophyll a' dimer, A0 is one or more chlorophyll a, A1 is one or both phylloquinones and FX is a shared 4Fe-4S iron-sulfur center. serves as cofactor.

Its subcellular location is the plastid. The protein resides in the chloroplast thylakoid membrane. The enzyme catalyses reduced [plastocyanin] + hnu + oxidized [2Fe-2S]-[ferredoxin] = oxidized [plastocyanin] + reduced [2Fe-2S]-[ferredoxin]. Functionally, psaA and PsaB bind P700, the primary electron donor of photosystem I (PSI), as well as the electron acceptors A0, A1 and FX. PSI is a plastocyanin-ferredoxin oxidoreductase, converting photonic excitation into a charge separation, which transfers an electron from the donor P700 chlorophyll pair to the spectroscopically characterized acceptors A0, A1, FX, FA and FB in turn. Oxidized P700 is reduced on the lumenal side of the thylakoid membrane by plastocyanin. This Coffea arabica (Arabian coffee) protein is Photosystem I P700 chlorophyll a apoprotein A2.